A 906-amino-acid polypeptide reads, in one-letter code: Serine-aspartate repeat-containing protein C (906 aa).

Residues 1–50 (MNNKKTATNRKGMIPNRLNKFSIRKYSVGTASILVGTTLIFGLSGHEAKA) form the signal peptide. A disordered region spans residues 51 to 127 (AEHTNGELNQ…QPTKKNNDAT (77 aa)). Residues 51 to 486 (AEHTNGELNQ…GSSTANGDQK (436 aa)) are ligand binding A region. 2 stretches are compositionally biased toward polar residues: residues 56-71 (GELNQSKNEATAPSEN) and 80-119 (RQQNNVEQSTTSNQPKVNESDNTSVKETTEEPQNTTSTQP). CNA-B domains are found at residues 487–597 (KYNL…YKTP) and 598–708 (KYSL…EEET). Residues 669 to 881 (KQTGTNTTED…TGSENNGSNN (213 aa)) are disordered. Acidic residues-rich tracts occupy residues 676 to 686 (TEDDKDADGGE) and 703 to 845 (YFEE…DSDS). The LPXTG sorting signal motif lies at 869–873 (LPETG). Threonine 872 carries the pentaglycyl murein peptidoglycan amidated threonine modification. Residues 873–906 (GSENNGSNNATLFGGLFAALGSLLLFGRRKKQNK) constitute a propeptide, removed by sortase.

The protein belongs to the serine-aspartate repeat-containing protein (SDr) family. Homodimerizes; via N2-Domain. Interacts with host NRXN1; this interaction mediates bacterial attachment to host cells.

The protein resides in the secreted. Its subcellular location is the cell wall. Functionally, cell surface-associated calcium-binding protein which plays an important role in adhesion and pathogenesis. Mediates interactions with components of the extracellular matrix such as host NRXN1 to promote bacterial adhesion. This Staphylococcus aureus (strain MRSA252) protein is Serine-aspartate repeat-containing protein C (sdrC).